A 246-amino-acid polypeptide reads, in one-letter code: O-antigen export system ATP-binding protein RfbB (246 aa).

In terms of domain architecture, ABC transporter spans 22–246 (SGIKDLIFHP…IIELYKQAMA (225 aa)). ATP is bound at residue 63–70 (GRNGAGKS).

Belongs to the ABC transporter superfamily.

The protein resides in the cell inner membrane. Functionally, may form an ATP-driven O-antigen export apparatus, in association with RfbA. This Klebsiella pneumoniae protein is O-antigen export system ATP-binding protein RfbB (rfbB).